The chain runs to 620 residues: Chaperone protein HscA homolog (620 aa).

This sequence belongs to the heat shock protein 70 family.

Functionally, chaperone involved in the maturation of iron-sulfur cluster-containing proteins. Has a low intrinsic ATPase activity which is markedly stimulated by HscB. This Pseudomonas fluorescens (strain ATCC BAA-477 / NRRL B-23932 / Pf-5) protein is Chaperone protein HscA homolog.